Reading from the N-terminus, the 742-residue chain is Clamp-binding protein CrfC (742 aa).

The interval 41–45 (QLALP) is clamp-binding consensus. The 337-residue stretch at 66-402 (SRLEMVLAIV…LWEDSLFAQP (337 aa)) folds into the Dynamin-type G domain. A G1 motif region spans residues 76 to 83 (GTMKAGKS). The segment at 102 to 104 (MTA) is G2 motif. Positions 236–239 (DTPG) are G3 motif. A G4 motif region spans residues 297–300 (NKFD). The tract at residues 331 to 334 (FPVS) is G5 motif. Positions 440–472 (RAHGLNVACEQLRQNIHQVEESLQLLQLNQAQV) form a coiled coil.

It belongs to the TRAFAC class dynamin-like GTPase superfamily. Dynamin/Fzo/YdjA family. In terms of assembly, forms homooligomers. Binds to the beta sliding clamp processivity factor (DnaN) in the presence and absence of DNA, may bind to the clamp itself as homodimers or trimers. Homooligomers may be able to bind more than 1 clamp complex.

The protein resides in the cytoplasm. Functionally, important for the colocalization of sister nascent DNA strands after replication fork passage during DNA replication, and for positioning and subsequent partitioning of sister chromosomes. Does not have GTPase activity on its own. The polypeptide is Clamp-binding protein CrfC (crfC) (Escherichia coli).